We begin with the raw amino-acid sequence, 271 residues long: ATP synthase subunit a (271 aa).

Helical transmembrane passes span 38–58 (FWTLNIDSMFFSVVLGLLFLV), 100–120 (LIAPLALTIFVWVFLMNLMDL), 146–166 (DVNITLSMALGVFILILFYSI), 220–240 (LIFILIAGLLPWWSQWILNVP), and 242–262 (AIFHILIITLQAFIFMVLTIV).

The protein belongs to the ATPase A chain family. F-type ATPases have 2 components, CF(1) - the catalytic core - and CF(0) - the membrane proton channel. CF(1) has five subunits: alpha(3), beta(3), gamma(1), delta(1), epsilon(1). CF(0) has three main subunits: a(1), b(2) and c(9-12). The alpha and beta chains form an alternating ring which encloses part of the gamma chain. CF(1) is attached to CF(0) by a central stalk formed by the gamma and epsilon chains, while a peripheral stalk is formed by the delta and b chains.

Its subcellular location is the cell inner membrane. Key component of the proton channel; it plays a direct role in the translocation of protons across the membrane. This Salmonella choleraesuis (strain SC-B67) protein is ATP synthase subunit a.